An 834-amino-acid polypeptide reads, in one-letter code: MKLCGVRSSGVSLTRSSDFPRFRAAHHGGAHTATRHQSLCGRRLDSYMGAGKRWCFRPLLAEPRRYSNASSAFTTDGATAPAHGEGLYVSHYAMPEDARRLVGTPQLLPRNPAEEVAFKKNLIRSFPQACIRNVSVVAHVDHGKTTLSDAMLRFSNLLPADGATGTFTDRLKVEKERGITIKAQTCSVLLTLRETGTQYLVNLIDTPGHVDFQYEVSRSLCASEGAALLVDVRQGVEAQTMAQFYAALEQNLTILPVLTKMDSVMSDAEVEKTLLQLEDSTGLLSREVILTSAKSKRGIEQLFQHIIDKVPPPCGREGFSDMKQLPAMHPGSADRKKVEKELVPLRALLFDCWTSESSGMADGAASAPVSTASSVSSGTAPASGGQSVAKDGIYGLIRVMDGTVTPGTTVTFFHSGKKHEVREVGIIHPTLHPTAALTAGMVGFVFFPGLLKKDVFIGDTLCTLPTRKHTMRVVATGSPATASRTKPATAAETASSDDASGSGSSSVVEPIPGFKTVQPVVFAGFYPDEGVYITQLREAVDLLCVNDPSVTVEQLQCPALGPGLQLGFLGFLHMQVFKERLLMEFGQAVLVTPPQVQYMYVEQHGDPDDPAQRKPVSVSNWRWPHEGVGAYLEPFVTATVLTPSEYLNEINSAALSAFRGEMQEMRVIDGARTLVRYRMPLADLARGFFSTVKSSSHGYATLEYDDLTYMTADLVKMDIVINKAHISALSTICLRHEANTHARRIIGSLKEKLLRSSVDLPLQALVGSKIIARETVKAYRKDVTAKIHAGDISRKQKKWNDQKKGKERMARRSVGTVTLDQSVLAAALGATTAR.

The N-terminal 66 residues, 1-66 (MKLCGVRSSG…RPLLAEPRRY (66 aa)), are a transit peptide targeting the mitochondrion. The region spanning 129–314 (ACIRNVSVVA…HIIDKVPPPC (186 aa)) is the tr-type G domain. GTP is bound by residues 138-145 (AHVDHGKT), 205-209 (DTPGH), and 259-262 (TKMD). 2 disordered regions span residues 363-385 (GAASAPVSTASSVSSGTAPASGG) and 476-507 (TGSPATASRTKPATAAETASSDDASGSGSSSV). Low complexity predominate over residues 488–507 (ATAAETASSDDASGSGSSSV).

Belongs to the TRAFAC class translation factor GTPase superfamily. Classic translation factor GTPase family. LepA subfamily.

The protein resides in the mitochondrion inner membrane. The catalysed reaction is GTP + H2O = GDP + phosphate + H(+). Promotes mitochondrial protein synthesis. May act as a fidelity factor of the translation reaction, by catalyzing a one-codon backward translocation of tRNAs on improperly translocated ribosomes. Binds to mitochondrial ribosomes in a GTP-dependent manner. This is Translation factor GUF1 homolog, mitochondrial from Leishmania infantum.